The primary structure comprises 326 residues: tRNA-modifying protein YgfZ (326 aa).

Residues Trp27 and Trp189 each coordinate folate.

The protein belongs to the tRNA-modifying YgfZ family.

The protein localises to the cytoplasm. Folate-binding protein involved in regulating the level of ATP-DnaA and in the modification of some tRNAs. It is probably a key factor in regulatory networks that act via tRNA modification, such as initiation of chromosomal replication. The protein is tRNA-modifying protein YgfZ of Escherichia coli O127:H6 (strain E2348/69 / EPEC).